Here is a 161-residue protein sequence, read N- to C-terminus: Allophycocyanin subunit alpha 1 (161 aa).

An N4-methylasparagine modification is found at Asn71. Cys81 provides a ligand contact to (2R,3E)-phycocyanobilin.

It belongs to the phycobiliprotein family. In terms of assembly, heterohexamer of two alpha chains, one alpha-B chain and three beta chains. Post-translationally, contains one covalently linked phycocyanobilin chromophore. The chromophore is added by phycocyanobilin lyase CpcS 1.

It localises to the cellular thylakoid membrane. Light-harvesting photosynthetic bile pigment-protein from the phycobiliprotein complex. Allophycocyanin has a maximum absorption at approximately 650 to 653 nanometers. The polypeptide is Allophycocyanin subunit alpha 1 (apcA1) (Nostoc sp. (strain PCC 7120 / SAG 25.82 / UTEX 2576)).